A 396-amino-acid polypeptide reads, in one-letter code: S-arrestin (396 aa).

This sequence belongs to the arrestin family.

In terms of biological role, arrestin is one of the major proteins of the ros (retinal rod outer segments); it binds to photoactivated-phosphorylated rhodopsin, thereby apparently preventing the transducin-mediated activation of phosphodiesterase. The chain is S-arrestin from Lithobates pipiens (Northern leopard frog).